The sequence spans 111 residues: Photosystem II reaction center Psb28 protein (111 aa).

Belongs to the Psb28 family. Part of the photosystem II complex.

The protein localises to the cellular thylakoid membrane. This Trichormus variabilis (strain ATCC 29413 / PCC 7937) (Anabaena variabilis) protein is Photosystem II reaction center Psb28 protein.